Reading from the N-terminus, the 262-residue chain is tRNA pseudouridine synthase A 2 (262 aa).

The active-site Nucleophile is D66. Y125 is a substrate binding site.

It belongs to the tRNA pseudouridine synthase TruA family. Homodimer.

The catalysed reaction is uridine(38/39/40) in tRNA = pseudouridine(38/39/40) in tRNA. Its function is as follows. Formation of pseudouridine at positions 38, 39 and 40 in the anticodon stem and loop of transfer RNAs. In Protochlamydia amoebophila (strain UWE25), this protein is tRNA pseudouridine synthase A 2.